A 277-amino-acid chain; its full sequence is Phosphatidylglycerol--prolipoprotein diacylglyceryl transferase (277 aa).

Transmembrane regions (helical) follow at residues 18-38 (ISVK…LLLA), 51-71 (IIVD…RIYY), 89-109 (IWHG…TAII), and 116-136 (ISFW…QAIG). Arg137 contacts a 1,2-diacyl-sn-glycero-3-phospho-(1'-sn-glycerol). 3 consecutive transmembrane segments (helical) span residues 177 to 197 (QPTF…LLII), 205 to 225 (GELF…IEGM), and 235 to 255 (FRVS…IIIY).

The protein belongs to the Lgt family.

It is found in the cell membrane. It carries out the reaction L-cysteinyl-[prolipoprotein] + a 1,2-diacyl-sn-glycero-3-phospho-(1'-sn-glycerol) = an S-1,2-diacyl-sn-glyceryl-L-cysteinyl-[prolipoprotein] + sn-glycerol 1-phosphate + H(+). The protein operates within protein modification; lipoprotein biosynthesis (diacylglyceryl transfer). Its function is as follows. Catalyzes the transfer of the diacylglyceryl group from phosphatidylglycerol to the sulfhydryl group of the N-terminal cysteine of a prolipoprotein, the first step in the formation of mature lipoproteins. The protein is Phosphatidylglycerol--prolipoprotein diacylglyceryl transferase of Listeria monocytogenes serotype 4a (strain HCC23).